A 228-amino-acid chain; its full sequence is 2,3-bisphosphoglycerate-dependent phosphoglycerate mutase (228 aa).

Substrate contacts are provided by residues 8-15 (RHGQSVWN), 21-22 (TG), arginine 60, 87-90 (ERHY), lysine 98, 114-115 (RR), and 183-184 (GN). Histidine 9 (tele-phosphohistidine intermediate) is an active-site residue. Glutamate 87 serves as the catalytic Proton donor/acceptor.

It belongs to the phosphoglycerate mutase family. BPG-dependent PGAM subfamily.

The catalysed reaction is (2R)-2-phosphoglycerate = (2R)-3-phosphoglycerate. It functions in the pathway carbohydrate degradation; glycolysis; pyruvate from D-glyceraldehyde 3-phosphate: step 3/5. In terms of biological role, catalyzes the interconversion of 2-phosphoglycerate and 3-phosphoglycerate. This Staphylococcus saprophyticus subsp. saprophyticus (strain ATCC 15305 / DSM 20229 / NCIMB 8711 / NCTC 7292 / S-41) protein is 2,3-bisphosphoglycerate-dependent phosphoglycerate mutase.